The primary structure comprises 391 residues: Small ribosomal subunit protein bS1 (391 aa).

4 consecutive S1 motif domains span residues 16–90, 108–173, 194–262, and 279–348; these read GDKV…LSRR, NEII…LSRK, GDVI…LSIK, and NDVI…LSIK.

The protein belongs to the bacterial ribosomal protein bS1 family.

Binds mRNA; thus facilitating recognition of the initiation point. It is needed to translate mRNA with a short Shine-Dalgarno (SD) purine-rich sequence. This Staphylococcus aureus (strain N315) protein is Small ribosomal subunit protein bS1 (rpsA).